A 264-amino-acid chain; its full sequence is Thymidylate synthase (264 aa).

Position 21 (arginine 21) interacts with dUMP. Histidine 51 provides a ligand contact to (6R)-5,10-methylene-5,6,7,8-tetrahydrofolate. Residue 126 to 127 (RR) coordinates dUMP. Catalysis depends on cysteine 146, which acts as the Nucleophile. Residues 166–169 (RSAD), asparagine 177, and 207–209 (HLY) each bind dUMP. Residue aspartate 169 coordinates (6R)-5,10-methylene-5,6,7,8-tetrahydrofolate. (6R)-5,10-methylene-5,6,7,8-tetrahydrofolate is bound at residue serine 263.

It belongs to the thymidylate synthase family. Bacterial-type ThyA subfamily. In terms of assembly, homodimer.

It is found in the cytoplasm. It carries out the reaction dUMP + (6R)-5,10-methylene-5,6,7,8-tetrahydrofolate = 7,8-dihydrofolate + dTMP. The protein operates within pyrimidine metabolism; dTTP biosynthesis. Functionally, catalyzes the reductive methylation of 2'-deoxyuridine-5'-monophosphate (dUMP) to 2'-deoxythymidine-5'-monophosphate (dTMP) while utilizing 5,10-methylenetetrahydrofolate (mTHF) as the methyl donor and reductant in the reaction, yielding dihydrofolate (DHF) as a by-product. This enzymatic reaction provides an intracellular de novo source of dTMP, an essential precursor for DNA biosynthesis. This is Thymidylate synthase from Neisseria meningitidis serogroup B (strain ATCC BAA-335 / MC58).